The chain runs to 316 residues: MTQLEALKQLSMVVADTGDLEAIKRYQPHDATTNPSLILKAFELPGYQALIDETLAQVKADIADPQARVDEAVDRLSVAMGSEITQLIPGRVSTEVAAKLSFDREASIAKAHRLIELYEQRGIGRERVLIKLASTWEGIRAAEQLEKEGIQCNLTLLFSEAQARACFDAGVYLISPFVGRVTDWYKQKTGQEYTPEEDPGVVFVRKVCDIASRYRYDTVVMGASFRTKGQILGLAGCNRLTISPALLEELESEEGDIERKISDVGDASERLAPIDEAAFRWGLNQDAMATEKLAEGIRRFADDQATLEEKLAARLG.

K131 (schiff-base intermediate with substrate) is an active-site residue.

This sequence belongs to the transaldolase family. Type 1 subfamily. In terms of assembly, homodimer.

Its subcellular location is the cytoplasm. The enzyme catalyses D-sedoheptulose 7-phosphate + D-glyceraldehyde 3-phosphate = D-erythrose 4-phosphate + beta-D-fructose 6-phosphate. Its pathway is carbohydrate degradation; pentose phosphate pathway; D-glyceraldehyde 3-phosphate and beta-D-fructose 6-phosphate from D-ribose 5-phosphate and D-xylulose 5-phosphate (non-oxidative stage): step 2/3. Its function is as follows. Transaldolase is important for the balance of metabolites in the pentose-phosphate pathway. In Chromohalobacter salexigens (strain ATCC BAA-138 / DSM 3043 / CIP 106854 / NCIMB 13768 / 1H11), this protein is Transaldolase.